Reading from the N-terminus, the 421-residue chain is Ethanolamine-phosphate cytidylyltransferase (421 aa).

A helical membrane pass occupies residues 8–28 (IVGSCIVGGAAFAVGASFLHL). Positions 203-227 (SRSSLQRQFSHGHSSPKFEDGASSA) are disordered. A compositionally biased stretch (polar residues) spans 204–215 (RSSLQRQFSHGH). CTP-binding positions include 262 to 263 (AF), 270 to 273 (HVEI), arginine 298, 346 to 349 (HGTV), and 377 to 381 (SPLDI). The interval 402 to 421 (AKKEASEKKYYEQKSFVSGD) is disordered. Basic and acidic residues predominate over residues 403–413 (KKEASEKKYYE). Position 416 is a phosphoserine (serine 416).

This sequence belongs to the cytidylyltransferase family. Expressed in root tip, lateral root primordia, leaves, shoot apex, stem vascular bundles, pollen and embryos.

The protein resides in the mitochondrion outer membrane. The enzyme catalyses phosphoethanolamine + CTP + H(+) = CDP-ethanolamine + diphosphate. Its pathway is phospholipid metabolism; phosphatidylethanolamine biosynthesis; phosphatidylethanolamine from ethanolamine: step 2/3. In terms of biological role, plays an important role in the biosynthesis of the phospholipid phosphatidylethanolamine. Catalyzes the formation of CDP-ethanolamine. Essential for early embryonic development. This Arabidopsis thaliana (Mouse-ear cress) protein is Ethanolamine-phosphate cytidylyltransferase.